Consider the following 362-residue polypeptide: Heat-inducible transcription repressor HrcA (362 aa).

This sequence belongs to the HrcA family.

Functionally, negative regulator of class I heat shock genes (grpE-dnaK-dnaJ and groELS operons). Prevents heat-shock induction of these operons. The chain is Heat-inducible transcription repressor HrcA from Rhizobium rhizogenes (strain K84 / ATCC BAA-868) (Agrobacterium radiobacter).